Here is a 155-residue protein sequence, read N- to C-terminus: Small ribosomal subunit protein uS7 (155 aa).

It belongs to the universal ribosomal protein uS7 family. In terms of assembly, part of the 30S ribosomal subunit. Contacts proteins S9 and S11.

One of the primary rRNA binding proteins, it binds directly to 16S rRNA where it nucleates assembly of the head domain of the 30S subunit. Is located at the subunit interface close to the decoding center, probably blocks exit of the E-site tRNA. In Thermotoga maritima (strain ATCC 43589 / DSM 3109 / JCM 10099 / NBRC 100826 / MSB8), this protein is Small ribosomal subunit protein uS7.